We begin with the raw amino-acid sequence, 169 residues long: Probable phospholipid hydroperoxide glutathione peroxidase (169 aa).

The active site involves Cys-43.

It belongs to the glutathione peroxidase family.

It localises to the cytoplasm. It carries out the reaction a hydroperoxy polyunsaturated fatty acid + 2 glutathione = a hydroxy polyunsaturated fatty acid + glutathione disulfide + H2O. Functionally, protects cells and enzymes from oxidative damage, by catalyzing the reduction of hydrogen peroxide, lipid peroxides and organic hydroperoxide, by glutathione. This is Probable phospholipid hydroperoxide glutathione peroxidase from Nicotiana tabacum (Common tobacco).